A 92-amino-acid polypeptide reads, in one-letter code: MNKNYSYPLDLSWSTEELASVLSFLNDVEKAYESKVSAQQLLGSYAVFKEVVPSKAEEKRIGREFESVSGYSLYRAVQAAKNTEKGMISLGK.

Belongs to the UPF0223 family.

The chain is UPF0223 protein SGO_1052 from Streptococcus gordonii (strain Challis / ATCC 35105 / BCRC 15272 / CH1 / DL1 / V288).